Consider the following 43-residue polypeptide: Omega-agatoxin-Aa3c (43 aa).

3 disulfide bridges follow: Cys-2/Cys-19, Cys-9/Cys-25, and Cys-27/Cys-38.

The protein belongs to the neurotoxin 04 (omega-agtx) family. 03 (type II/III omega-agtx) subfamily. As to expression, expressed by the venom gland.

The protein localises to the secreted. In terms of biological role, omega-agatoxins are antagonists of voltage-gated calcium channels (Cav). The polypeptide is Omega-agatoxin-Aa3c (Agelenopsis aperta (North American funnel-web spider)).